The sequence spans 432 residues: Ribosomal protein uS12 methylthiotransferase RimO (432 aa).

In terms of domain architecture, MTTase N-terminal spans Asn-4 to His-122. 6 residues coordinate [4Fe-4S] cluster: Cys-13, Cys-51, Cys-85, Cys-146, Cys-150, and Cys-153. In terms of domain architecture, Radical SAM core spans Thr-132–Asp-363. One can recognise a TRAM domain in the interval Ala-366–Asn-432.

It belongs to the methylthiotransferase family. RimO subfamily. It depends on [4Fe-4S] cluster as a cofactor.

It is found in the cytoplasm. The enzyme catalyses L-aspartate(89)-[ribosomal protein uS12]-hydrogen + (sulfur carrier)-SH + AH2 + 2 S-adenosyl-L-methionine = 3-methylsulfanyl-L-aspartate(89)-[ribosomal protein uS12]-hydrogen + (sulfur carrier)-H + 5'-deoxyadenosine + L-methionine + A + S-adenosyl-L-homocysteine + 2 H(+). Functionally, catalyzes the methylthiolation of an aspartic acid residue of ribosomal protein uS12. The protein is Ribosomal protein uS12 methylthiotransferase RimO of Parabacteroides distasonis (strain ATCC 8503 / DSM 20701 / CIP 104284 / JCM 5825 / NCTC 11152).